The chain runs to 374 residues: MTDHSNTRVVVGMSGGVDSSVVALLLKQQGYDVVGVFMKNWDDTDENGVCTATEDYKDVAKVADKIGIPYYSINFEKEYWDRVFTYFLDEYKKGRTPNPDVICNKEIKFKAFLDYAMDLGADYIATGHYARLQHDEDGTMHLLRGVDSNKDQTYFLSQLDSKTLQKVMFPLGEMVKPDVRKLALNAGLATAKKKDSVGICFIGEKNFKEFLGHYLPATPGKMMTFDGQVKGEHAGLMYYTIGQRRGLGIGGDGEDNEPWFVVGKDLKKNILYVGKGYHNPHLYATHLKASDLHFVTDEDLGNDFHVTAKFRYRQKDSGVTVHFNDDHTEVTVTFDDPVRAITPGQAVVFYNGEECLGSGMIDAAYNDERVLQYV.

Residues 12 to 19 (GMSGGVDS) and Met38 contribute to the ATP site. The segment at 98–100 (NPD) is interaction with target base in tRNA. Cys103 serves as the catalytic Nucleophile. Cysteines 103 and 200 form a disulfide. Gly127 contributes to the ATP binding site. Residues 150 to 152 (KDQ) are interaction with tRNA. Catalysis depends on Cys200, which acts as the Cysteine persulfide intermediate. The interaction with tRNA stretch occupies residues 311–312 (RY).

This sequence belongs to the MnmA/TRMU family.

The protein resides in the cytoplasm. It catalyses the reaction S-sulfanyl-L-cysteinyl-[protein] + uridine(34) in tRNA + AH2 + ATP = 2-thiouridine(34) in tRNA + L-cysteinyl-[protein] + A + AMP + diphosphate + H(+). In terms of biological role, catalyzes the 2-thiolation of uridine at the wobble position (U34) of tRNA, leading to the formation of s(2)U34. This is tRNA-specific 2-thiouridylase MnmA from Lactiplantibacillus plantarum (strain ATCC BAA-793 / NCIMB 8826 / WCFS1) (Lactobacillus plantarum).